We begin with the raw amino-acid sequence, 499 residues long: Apolipoprotein N-acyltransferase (499 aa).

Transmembrane regions (helical) follow at residues 9–29, 50–70, 77–97, 114–134, 148–168, and 183–203; these read LLLGLLSGLVFAPTFLLPALL, LGYIFGFGHFLSGIYWISIGV, FWWAIPFALFGLPIILAFFVS, FIFCLYWVLFEWVRSWIFTGL, ILIQSLNIIGIYGLSFIVIYI, and LKVLLLTSSITLAVIITYGSV. The CN hydrolase domain maps to 220–464; the sequence is VQPSIPQTEK…DGLIPKKLDS (245 aa). Glu-259 serves as the catalytic Proton acceptor. Lys-322 is an active-site residue. The Nucleophile role is filled by Cys-372. Residues 466 to 486 traverse the membrane as a helical segment; sequence TIFSKFGNITILLIVFFIFLV.

It belongs to the CN hydrolase family. Apolipoprotein N-acyltransferase subfamily.

The protein resides in the cell inner membrane. The catalysed reaction is N-terminal S-1,2-diacyl-sn-glyceryl-L-cysteinyl-[lipoprotein] + a glycerophospholipid = N-acyl-S-1,2-diacyl-sn-glyceryl-L-cysteinyl-[lipoprotein] + a 2-acyl-sn-glycero-3-phospholipid + H(+). It functions in the pathway protein modification; lipoprotein biosynthesis (N-acyl transfer). In terms of biological role, catalyzes the phospholipid dependent N-acylation of the N-terminal cysteine of apolipoprotein, the last step in lipoprotein maturation. The sequence is that of Apolipoprotein N-acyltransferase from Rickettsia bellii (strain RML369-C).